We begin with the raw amino-acid sequence, 323 residues long: Fructokinase-1 (323 aa).

Belongs to the carbohydrate kinase PfkB family. As to expression, expressed in root, endosperm and leaf tissues.

It carries out the reaction D-fructose + ATP = D-fructose 6-phosphate + ADP + H(+). It participates in glycan biosynthesis; starch biosynthesis. With respect to regulation, completely inhibited at 50 mM ATP, but not inhibited at high fructose concentration. Functionally, fructokinase that may play an important role in maintaining the flux of carbon towards starch formation. May also be involved in a sugar-sensing pathway. In Oryza sativa subsp. japonica (Rice), this protein is Fructokinase-1.